Here is a 674-residue protein sequence, read N- to C-terminus: DNA ligase (674 aa).

NAD(+)-binding positions include 34–38, 84–85, and glutamate 116; these read DAEYD and SL. Catalysis depends on lysine 118, which acts as the N6-AMP-lysine intermediate. 4 residues coordinate NAD(+): arginine 139, glutamate 174, lysine 291, and lysine 315. The Zn(2+) site is built by cysteine 409, cysteine 412, cysteine 425, and cysteine 430. A BRCT domain is found at 586–674; the sequence is RGEEALKGLT…TGKPVETLAS (89 aa).

Belongs to the NAD-dependent DNA ligase family. LigA subfamily. The cofactor is Mg(2+). It depends on Mn(2+) as a cofactor.

The enzyme catalyses NAD(+) + (deoxyribonucleotide)n-3'-hydroxyl + 5'-phospho-(deoxyribonucleotide)m = (deoxyribonucleotide)n+m + AMP + beta-nicotinamide D-nucleotide.. Its function is as follows. DNA ligase that catalyzes the formation of phosphodiester linkages between 5'-phosphoryl and 3'-hydroxyl groups in double-stranded DNA using NAD as a coenzyme and as the energy source for the reaction. It is essential for DNA replication and repair of damaged DNA. The polypeptide is DNA ligase (Thermus scotoductus).